The sequence spans 89 residues: Small ribosomal subunit protein uS15 (89 aa).

It belongs to the universal ribosomal protein uS15 family. Part of the 30S ribosomal subunit. Forms a bridge to the 50S subunit in the 70S ribosome, contacting the 23S rRNA.

Its function is as follows. One of the primary rRNA binding proteins, it binds directly to 16S rRNA where it helps nucleate assembly of the platform of the 30S subunit by binding and bridging several RNA helices of the 16S rRNA. Forms an intersubunit bridge (bridge B4) with the 23S rRNA of the 50S subunit in the ribosome. This Beijerinckia indica subsp. indica (strain ATCC 9039 / DSM 1715 / NCIMB 8712) protein is Small ribosomal subunit protein uS15.